The primary structure comprises 339 residues: MTKKRVLSGVQPTGAIHIGNWLGAIRNWVSLQNEYDTYVCVVDLHAITVPHDPQQLKENTLRTAALYVACGMDPKKCSIFVQSHISAHSELCWLLNCVTPLNWMERMIQFKEKAIKQGDNVSIGLLDYPVLMAADILLYDADLVPVGEDQKQHLELARDIAQQRVNSRFNKESKSILKIPKPLIMKEGGKIMSLIDGNMKMSKSDPNENSRIALLDSPEIIKKKIKRAKTDSFLGLEFDNNQRPEANNLLGIYSMVSNQNREAVQKEFSNIGWGKFKPILTDAIIESLNPIQQKYYSLIKDKTELNNILNKGYIKANTISNQTLKRVRNALGFLDKPIS.

Residues 11 to 13 (QPT) and 19 to 20 (GN) contribute to the ATP site. The 'HIGH' region motif lies at 12 to 20 (PTGAIHIGN). L-tryptophan is bound at residue aspartate 135. Residues 147–149 (GED), isoleucine 191, and 200–204 (KMSKS) contribute to the ATP site. A 'KMSKS' region motif is present at residues 200–204 (KMSKS).

The protein belongs to the class-I aminoacyl-tRNA synthetase family. As to quaternary structure, homodimer.

It localises to the cytoplasm. It carries out the reaction tRNA(Trp) + L-tryptophan + ATP = L-tryptophyl-tRNA(Trp) + AMP + diphosphate + H(+). In terms of biological role, catalyzes the attachment of tryptophan to tRNA(Trp). The chain is Tryptophan--tRNA ligase from Prochlorococcus marinus (strain SARG / CCMP1375 / SS120).